Here is an 876-residue protein sequence, read N- to C-terminus: Monofunctional isopimaradiene synthase, chloroplastic (876 aa).

The N-terminal 64 residues, 1 to 64 (MAMPSYSSLS…YLRLGSRKII (64 aa)), are a transit peptide targeting the chloroplast. Residues D628, D632, N772, T776, and E780 each coordinate Mg(2+). The short motif at 628–632 (DDLYD) is the DDXXD motif element.

Belongs to the terpene synthase family. Tpsd subfamily. The cofactor is Mg(2+).

It is found in the plastid. It localises to the chloroplast. It carries out the reaction (+)-copalyl diphosphate = isopimara-7,15-diene + diphosphate. It participates in terpene metabolism; oleoresin biosynthesis. Involved in defensive oleoresin formation in conifers in response to insect attack or other injury. Involved in diterpene (C20) olefins biosynthesis. Monofunctional enzyme lacking the DXDD motif in the class II active site relevant for the cyclization of geranylgeranyl diphosphate (GGPP). Requires (+)-copalyl diphosphate ((+)-CPP) as substrate, but no activity with GGPP or ent-CPP. Isopimaradiene is the major products of the enzyme followed by sandaracopimaradiene. The protein is Monofunctional isopimaradiene synthase, chloroplastic of Pinus contorta (Shore pine).